The chain runs to 474 residues: Glutamate--tRNA ligase (474 aa).

The 'HIGH' region signature appears at 10–20; sequence PSPTGYLHIGG. 4 residues coordinate Zn(2+): cysteine 107, cysteine 109, cysteine 134, and aspartate 136. Residues 244 to 248 carry the 'KMSKS' region motif; it reads RLSKR. Lysine 247 serves as a coordination point for ATP.

Belongs to the class-I aminoacyl-tRNA synthetase family. Glutamate--tRNA ligase type 1 subfamily. Monomer. Requires Zn(2+) as cofactor.

It localises to the cytoplasm. It catalyses the reaction tRNA(Glu) + L-glutamate + ATP = L-glutamyl-tRNA(Glu) + AMP + diphosphate. Catalyzes the attachment of glutamate to tRNA(Glu) in a two-step reaction: glutamate is first activated by ATP to form Glu-AMP and then transferred to the acceptor end of tRNA(Glu). The chain is Glutamate--tRNA ligase from Anaeromyxobacter dehalogenans (strain 2CP-C).